A 121-amino-acid chain; its full sequence is uncharacterized protein (121 aa).

This is an uncharacterized protein from Methanocaldococcus jannaschii (strain ATCC 43067 / DSM 2661 / JAL-1 / JCM 10045 / NBRC 100440) (Methanococcus jannaschii).